Here is a 125-residue protein sequence, read N- to C-terminus: MAASRSSITTLLLLIVAVALGYGILPISAKTSVARQLREQVDFVDAAALSESATSSSSSSALDHKSSAPGEATNASETEHSAASTASEPKHEGPTMMSFVGPAAAGVLAILLIGAVIAFKKRMNK.

Positions 1–21 (MAASRSSITTLLLLIVAVALG) are cleaved as a signal peptide. A RxLR motif is present at residues 35–38 (RQLR). Low complexity predominate over residues 51 to 87 (ESATSSSSSSALDHKSSAPGEATNASETEHSAASTAS). The disordered stretch occupies residues 51 to 96 (ESATSSSSSSALDHKSSAPGEATNASETEHSAASTASEPKHEGPTM). N-linked (GlcNAc...) asparagine glycosylation is present at Asn-74. Residues 99-119 (FVGPAAAGVLAILLIGAVIAF) traverse the membrane as a helical segment.

Belongs to the RxLR effector family.

It is found in the secreted. Its subcellular location is the host cell membrane. In terms of biological role, effector that acts as a broad suppressor of cell death to interrupt plant immunity. Inhibits cell death induced by cell death-inducing proteins, including the PAMP elicitor INF1 from P.infestans. This chain is Secreted RxLR effector protein 55, found in Plasmopara viticola (Downy mildew of grapevine).